Here is a 216-residue protein sequence, read N- to C-terminus: MSRRKQPDSPLFPLQAPVPDFTFERAAHRDGFWPVAGADEAGRGPLAGPVVAAAVILDPDAIPAGLNDSKLLTAEQREALFEEILATSTVSIASSSSARIDTTDILKASLDAMRRAVHGLELAARIVLVDGRDVPPGLSCHAKAIVKGDSRSVSIAAASIVAKVTRDRMMARADATFPLYGFAHHAGYATVKHRTAIESHGPCSLHRMSFRPFRQV.

One can recognise an RNase H type-2 domain in the interval 33 to 216; the sequence is WPVAGADEAG…RMSFRPFRQV (184 aa). 3 residues coordinate a divalent metal cation: Asp39, Glu40, and Asp130.

Belongs to the RNase HII family. It depends on Mn(2+) as a cofactor. The cofactor is Mg(2+).

The protein resides in the cytoplasm. It catalyses the reaction Endonucleolytic cleavage to 5'-phosphomonoester.. Functionally, endonuclease that specifically degrades the RNA of RNA-DNA hybrids. In Rhizobium meliloti (strain 1021) (Ensifer meliloti), this protein is Ribonuclease HII.